Reading from the N-terminus, the 552-residue chain is Ribosomal lysine N-methyltransferase 3 (552 aa).

The region spanning Ser-26–Gly-335 is the SET domain. Tyr-334 is a binding site for S-adenosyl-L-methionine. The interval Glu-399–Leu-432 is disordered. A compositionally biased stretch (acidic residues) spans Leu-413–Leu-432.

This sequence belongs to the class V-like SAM-binding methyltransferase superfamily.

The protein localises to the nucleus. S-adenosyl-L-methionine-dependent protein-lysine N-methyltransferase that monomethylates 60S ribosomal protein L42 (RPL42A and RPL42B) at 'Lys-40'. This Saccharomyces cerevisiae (strain ATCC 204508 / S288c) (Baker's yeast) protein is Ribosomal lysine N-methyltransferase 3.